Consider the following 613-residue polypeptide: Protein CER1-like 2 (613 aa).

The next 6 helical transmembrane spans lie at 13-33, 44-64, 95-115, 122-142, 182-202, and 322-342; these read WTPL…DSIY, LLIV…ISLS, IIFN…TSTI, GVIL…YWFH, LILG…VVSI, and YLFL…SFSF. The Fatty acid hydroxylase domain maps to 134–268; the sequence is VEFIYYWFHR…MPMYDYIYGT (135 aa).

It belongs to the sterol desaturase family. In terms of tissue distribution, not detected in any tissues.

It localises to the membrane. The chain is Protein CER1-like 2 from Arabidopsis thaliana (Mouse-ear cress).